A 188-amino-acid polypeptide reads, in one-letter code: Probable nicotinate-nucleotide adenylyltransferase (188 aa).

This sequence belongs to the NadD family.

It catalyses the reaction nicotinate beta-D-ribonucleotide + ATP + H(+) = deamido-NAD(+) + diphosphate. It functions in the pathway cofactor biosynthesis; NAD(+) biosynthesis; deamido-NAD(+) from nicotinate D-ribonucleotide: step 1/1. Its function is as follows. Catalyzes the reversible adenylation of nicotinate mononucleotide (NaMN) to nicotinic acid adenine dinucleotide (NaAD). The sequence is that of Probable nicotinate-nucleotide adenylyltransferase from Listeria innocua serovar 6a (strain ATCC BAA-680 / CLIP 11262).